The following is a 277-amino-acid chain: Myelin proteolipid protein (277 aa).

Topologically, residues 2-10 are cytoplasmic; the sequence is GLLECCARC. Residues Cys-6, Cys-7, and Cys-10 are each lipidated (S-palmitoyl cysteine). Residues 11–36 form a helical membrane-spanning segment; it reads LIGAPFASLVATGLCFFGVALFCGCG. The Extracellular segment spans residues 37–59; the sequence is HEALTGTEQLIETYFSKNYQDYE. Residues 60-88 traverse the membrane as a helical segment; the sequence is YLIDVIHAFQYVIYGTASFFFLYGALLLA. Topologically, residues 89–151 are cytoplasmic; the sequence is EGFYTTGAVR…LGKWLGHPDK (63 aa). 3 S-palmitoyl cysteine lipidation sites follow: Cys-109, Cys-139, and Cys-141. A helical membrane pass occupies residues 152–178; sequence FVGITYVLTIVWLLAFACSAVPVYIYF. Over 179–238 the chain is Extracellular; sequence NTWTTCQSIAFPTKTTASIGTLCADARMYGVLPWNAFPGKVCGSNLLSICKTSEFQMTFH. 2 disulfides stabilise this stretch: Cys-184–Cys-228 and Cys-201–Cys-220. The O-palmitoyl threonine moiety is linked to residue Thr-199. Residues 239 to 268 form a helical membrane-spanning segment; that stretch reads LFIAAFVGAAATLVSLLTFMIAATYNFAVL. The Cytoplasmic portion of the chain corresponds to 269-277; it reads KLMGRGTKF.

It belongs to the myelin proteolipid protein family.

Its subcellular location is the cell membrane. In terms of biological role, this is the major myelin protein from the central nervous system. It plays an important role in the formation or maintenance of the multilamellar structure of myelin. The polypeptide is Myelin proteolipid protein (PLP1) (Gallus gallus (Chicken)).